An 884-amino-acid chain; its full sequence is Cytosolic carboxypeptidase-like protein 5 (884 aa).

The region spanning 157 to 570 is the Peptidase M14 domain; it reads YPFSYSDCQD…AMAIAALDMA (414 aa). Histidine 252 and glutamate 255 together coordinate Zn(2+). Disordered stretches follow at residues 343–364 and 376–401; these read HPQSPSEHQHSPCLPPDAPLSD and HLGHTSDGDSPEDWTQTRPAEQKASG. Residue histidine 434 participates in Zn(2+) binding. Glutamate 516 acts as the Proton donor/acceptor in catalysis. Disordered stretches follow at residues 603–737 and 784–859; these read LSST…HSTG and QVRP…RICY. Polar residues predominate over residues 620 to 635; that stretch reads PPRSNSGLPVSCSENP. Composition is skewed to low complexity over residues 641-666 and 714-737; these read SFSTGTSAGGSSSSQQNSPQMKNSPS and PTSSSLAPSPNPTSSSPASSHSTG. Serine 839 bears the Phosphoserine mark. The segment covering 846–857 has biased composition (polar residues); it reads ISCSLSDSQSRI.

The protein belongs to the peptidase M14 family. Requires Zn(2+) as cofactor.

The protein resides in the cytoplasm. Its subcellular location is the cytosol. It localises to the nucleus. It is found in the cytoskeleton. The protein localises to the spindle. The protein resides in the midbody. It catalyses the reaction gamma-L-glutamyl-L-glutamyl-[protein] + H2O = L-glutamyl-[protein] + L-glutamate. The catalysed reaction is (L-glutamyl)(n+1)-gamma-L-glutamyl-L-glutamyl-[protein] + H2O = (L-glutamyl)(n)-gamma-L-glutamyl-L-glutamyl-[protein] + L-glutamate. The enzyme catalyses C-terminal L-alpha-aminoacyl-L-glutamyl-[tubulin] + H2O = C-terminal L-alpha-aminoacyl-[tubulin] + L-glutamate. It carries out the reaction C-terminal L-alpha-aminoacyl-L-glutamyl-L-glutamyl-[tubulin] + H2O = C-terminal L-alpha-aminoacyl-L-glutamyl-[tubulin] + L-glutamate. Functionally, metallocarboxypeptidase that mediates deglutamylation of tubulin and non-tubulin target proteins. Catalyzes the removal of polyglutamate side chains present on the gamma-carboxyl group of glutamate residues within the C-terminal tail of alpha- and beta-tubulin. Cleaves alpha- and gamma-linked polyglutamate tubulin side-chain, as well as the branching point glutamate. Also catalyzes the removal of alpha-linked glutamate residues from the carboxy-terminus of alpha-tubulin. Mediates deglutamylation of nucleotidyltransferase CGAS, leading to CGAS antiviral defense response activation. The sequence is that of Cytosolic carboxypeptidase-like protein 5 (AGBL5) from Ailuropoda melanoleuca (Giant panda).